Reading from the N-terminus, the 219-residue chain is Protein P25 (219 aa).

The Nuclear localization signal signature appears at 57–62 (KRIRFR). Residues 103–146 (DPTRLDSSVNELLVSNGLVTHYDRVHNVPIHTDGFEVVDFTTVF) form a transcription activation region. A Nuclear export signal motif is present at residues 169-178 (VYMVCLVNTV).

Belongs to the benyvirus P25 protein family. Homooligomer.

Its subcellular location is the host cytoplasm. It localises to the host nucleus. Pathogenicity factor implicated in symptom exacerbation. Might function as transcription activator (Potential). The chain is Protein P25 from Beet necrotic yellow vein virus (isolate Japan/S) (BNYVV).